The following is a 521-amino-acid chain: Probable tRNA (uracil-O(2)-)-methyltransferase (521 aa).

The protein belongs to the TRM44 family.

It is found in the cytoplasm. It catalyses the reaction uridine(44) in tRNA(Ser) + S-adenosyl-L-methionine = 2'-O-methyluridine(44) in tRNA(Ser) + S-adenosyl-L-homocysteine + H(+). Probable adenosyl-L-methionine (AdoMet)-dependent tRNA (uracil-O(2)-)-methyltransferase. This Drosophila melanogaster (Fruit fly) protein is Probable tRNA (uracil-O(2)-)-methyltransferase (trmt44).